Here is a 506-residue protein sequence, read N- to C-terminus: Glutamate--tRNA ligase (506 aa).

Positions 21–31 (PSPTGIPHVGM) match the 'HIGH' region motif. Residues 265 to 269 (KLSKR) carry the 'KMSKS' region motif. An ATP-binding site is contributed by lysine 268.

It belongs to the class-I aminoacyl-tRNA synthetase family. Glutamate--tRNA ligase type 1 subfamily. In terms of assembly, monomer.

The protein resides in the cytoplasm. The enzyme catalyses tRNA(Glu) + L-glutamate + ATP = L-glutamyl-tRNA(Glu) + AMP + diphosphate. Catalyzes the attachment of glutamate to tRNA(Glu) in a two-step reaction: glutamate is first activated by ATP to form Glu-AMP and then transferred to the acceptor end of tRNA(Glu). The polypeptide is Glutamate--tRNA ligase (Bifidobacterium adolescentis (strain ATCC 15703 / DSM 20083 / NCTC 11814 / E194a)).